Consider the following 438-residue polypeptide: UDP-N-acetylmuramoylalanine--D-glutamate ligase (438 aa).

Residue 112 to 118 coordinates ATP; the sequence is GSNGKST.

Belongs to the MurCDEF family. Mg(2+) is required as a cofactor.

It is found in the cytoplasm. It catalyses the reaction UDP-N-acetyl-alpha-D-muramoyl-L-alanine + D-glutamate + ATP = UDP-N-acetyl-alpha-D-muramoyl-L-alanyl-D-glutamate + ADP + phosphate + H(+). Its pathway is cell wall biogenesis; peptidoglycan biosynthesis. Cell wall formation. Catalyzes the addition of glutamate to the nucleotide precursor UDP-N-acetylmuramoyl-L-alanine (UMA). This is UDP-N-acetylmuramoylalanine--D-glutamate ligase (murD) from Escherichia coli (strain K12).